A 333-amino-acid chain; its full sequence is Foldase protein PrsA (333 aa).

The first 19 residues, 1–19 (MKKRHLLIAGLACMTILGA), serve as a signal peptide directing secretion. Cys-20 carries N-palmitoyl cysteine lipidation. A lipid anchor (S-diacylglycerol cysteine) is attached at Cys-20. The region spanning 155–245 (LIEVEASHIL…YGYHIILVTD (91 aa)) is the PpiC domain. Residues 291 to 333 (GLFDLPDAPPVEDTPEIDGEDASDEAEDQAEDADENAEEEDES) are disordered. The span at 303-333 (DTPEIDGEDASDEAEDQAEDADENAEEEDES) shows a compositional bias: acidic residues.

Belongs to the PrsA family.

It is found in the cell membrane. The catalysed reaction is [protein]-peptidylproline (omega=180) = [protein]-peptidylproline (omega=0). Its function is as follows. Plays a major role in protein secretion by helping the post-translocational extracellular folding of several secreted proteins. The chain is Foldase protein PrsA from Halalkalibacterium halodurans (strain ATCC BAA-125 / DSM 18197 / FERM 7344 / JCM 9153 / C-125) (Bacillus halodurans).